We begin with the raw amino-acid sequence, 403 residues long: Blue light- and temperature-regulated antirepressor BluF (403 aa).

A BLUF domain is found at 2-93 (LTTLIYRSHI…ARRFGKAGME (92 aa)). Residues 98–144 (RLHERDDVLQAVFDKGTSKFQLTYDDRALQFFRTFVLATEQSTYFEI) are joining helix. Residues 155-403 (DGSDKELDSC…IPSIAWPEKK (249 aa)) form the EAL domain.

In terms of assembly, monomer, it undergoes transient dimerization following photoexcitation or upon temperature reduction, with a relaxation time of about 2 minutes. The dimer may be the inactive state. Interacts with the N- and C-terminal domains of BluR. Can also interact with the C-terminal domain of MlrA. FAD serves as cofactor.

Functionally, binds to and releases the BluR repressor from its bound DNA target in a blue light-dependent (470 nm) fashion. A shift to low temperature also triggers a BluF-mediated relief of repression by BluR, suggesting BluF may serve as a thermometer. Blue light may act to increase the affinity of BluF for BluR, allowing it to be released from its operator. The protein has a reversible photocycle, and undergoes structural changes, probably in the EAL domain, in response to light. This is Blue light- and temperature-regulated antirepressor BluF from Escherichia coli (strain K12).